Reading from the N-terminus, the 992-residue chain is ATP-dependent DNA helicase PIF7 (992 aa).

Residues 1–21 constitute a mitochondrion transit peptide; it reads MWDGPLRSRQNLRTVAKLRSS. Disordered regions lie at residues 20 to 43, 145 to 182, and 190 to 209; these read SSGC…GETA, TVNK…TAAS, and LDSS…AVTQ. 3 stretches are compositionally biased toward polar residues: residues 23-43, 173-182, and 191-208; these read CPLT…GETA, NVDNTTTAAS, and DSSS…QAVT. ATP is bound at residue 237-244; sequence GGAGTGKS. Residues 651 to 670 mediate DNA binding; the sequence is QAYVALSRCTDVANLVIENF.

This sequence belongs to the helicase family. PIF1 subfamily. Monomer. It depends on Mg(2+) as a cofactor.

The protein resides in the mitochondrion matrix. It localises to the kinetoplast. The enzyme catalyses Couples ATP hydrolysis with the unwinding of duplex DNA at the replication fork by translocating in the 5'-3' direction. This creates two antiparallel DNA single strands (ssDNA). The leading ssDNA polymer is the template for DNA polymerase III holoenzyme which synthesizes a continuous strand.. It catalyses the reaction ATP + H2O = ADP + phosphate + H(+). Its function is as follows. DNA-dependent ATPase and 5'-3' DNA helicase required for the maintenance of mitochondrial (kinetoplast) genome stability. In Trypanosoma brucei brucei (strain 927/4 GUTat10.1), this protein is ATP-dependent DNA helicase PIF7.